A 677-amino-acid polypeptide reads, in one-letter code: MTQVAKKILVTCALPYANGSIHLGHMLEHIQADVWVRYQRMRGHEVNFICADDAHGTPIMLKAQQLGITPEQMIGEMSQEHQTDFAGFNISYDNYHSTHSDENRELSELIYTRLKENGFIKNRTISQLYDPEKGMFLPDRFVKGTCPKCKSADQYGDNCEVCGATYSPTELIEPKSVVSGATPVMRDSEHFFFDLPSFSEMLQAWTRSGALQEQVANKMQEWFESGLQQWDISRDAPYFGFEIPNAPGKYFYVWLDAPIGYMGSFKNLCDKRGDTTSFEEYWKKDSDAELYHFIGKDIVYFHSLFWPAMLEGSHFRKPTNLFVHGYVTVNGAKMSKSRGTFIKASTWLKHFDADSLRYYYTAKLSSRIDDIDLNLEDFVQRVNADIVNKVVNLASRNAGFINKRFDGVLAAELADPQLYKTFTDAAVVIGEAWESREFGKAIREIMALADVANRYVDEQAPWVVAKQEGRDADLQAICSMGINLFRVLMTYLKPVLPTLSERVEAFLNSELNWDAIEQPLLGHKVNTFKALYNRIDMKQVEALVEASKEEVKAAAAPVTGPLADFPIQETITFDDFAKVDLRVALIENAEFVEGSDKLLRLTLDLGGEKRNVFSGIRSAYPDPQALIGRQTVMVANLAPRKMRFGVSEGMVMAAGPGGKDIFLLSPDDGAKPGQQVK.

The short motif at 15–25 (PYANGSIHLGH) is the 'HIGH' region element. Zn(2+) contacts are provided by cysteine 146, cysteine 149, cysteine 159, and cysteine 162. Positions 333 to 337 (KMSKS) match the 'KMSKS' region motif. ATP is bound at residue lysine 336. Positions 575–677 (DFAKVDLRVA…DGAKPGQQVK (103 aa)) constitute a tRNA-binding domain.

The protein belongs to the class-I aminoacyl-tRNA synthetase family. MetG type 1 subfamily. As to quaternary structure, homodimer. It depends on Zn(2+) as a cofactor.

Its subcellular location is the cytoplasm. It carries out the reaction tRNA(Met) + L-methionine + ATP = L-methionyl-tRNA(Met) + AMP + diphosphate. Is required not only for elongation of protein synthesis but also for the initiation of all mRNA translation through initiator tRNA(fMet) aminoacylation. This Salmonella schwarzengrund (strain CVM19633) protein is Methionine--tRNA ligase.